We begin with the raw amino-acid sequence, 513 residues long: Light-independent protochlorophyllide reductase subunit B (513 aa).

Aspartate 36 provides a ligand contact to [4Fe-4S] cluster. Aspartate 299 acts as the Proton donor in catalysis. Position 434 to 435 (434 to 435 (GM)) interacts with substrate.

This sequence belongs to the ChlB/BchB/BchZ family. In terms of assembly, protochlorophyllide reductase is composed of three subunits; ChlL, ChlN and ChlB. Forms a heterotetramer of two ChlB and two ChlN subunits. It depends on [4Fe-4S] cluster as a cofactor.

Its subcellular location is the plastid. The protein localises to the chloroplast. The enzyme catalyses chlorophyllide a + oxidized 2[4Fe-4S]-[ferredoxin] + 2 ADP + 2 phosphate = protochlorophyllide a + reduced 2[4Fe-4S]-[ferredoxin] + 2 ATP + 2 H2O. It participates in porphyrin-containing compound metabolism; chlorophyll biosynthesis (light-independent). Its function is as follows. Component of the dark-operative protochlorophyllide reductase (DPOR) that uses Mg-ATP and reduced ferredoxin to reduce ring D of protochlorophyllide (Pchlide) to form chlorophyllide a (Chlide). This reaction is light-independent. The NB-protein (ChlN-ChlB) is the catalytic component of the complex. This Cycas taitungensis (Prince sago) protein is Light-independent protochlorophyllide reductase subunit B.